The primary structure comprises 179 residues: Large ribosomal subunit protein uL5 (179 aa).

Belongs to the universal ribosomal protein uL5 family. As to quaternary structure, part of the 50S ribosomal subunit; part of the 5S rRNA/L5/L18/L25 subcomplex. Contacts the 5S rRNA and the P site tRNA. Forms a bridge to the 30S subunit in the 70S ribosome.

Functionally, this is one of the proteins that bind and probably mediate the attachment of the 5S RNA into the large ribosomal subunit, where it forms part of the central protuberance. In the 70S ribosome it contacts protein S13 of the 30S subunit (bridge B1b), connecting the 2 subunits; this bridge is implicated in subunit movement. Contacts the P site tRNA; the 5S rRNA and some of its associated proteins might help stabilize positioning of ribosome-bound tRNAs. In Listeria innocua serovar 6a (strain ATCC BAA-680 / CLIP 11262), this protein is Large ribosomal subunit protein uL5.